A 415-amino-acid chain; its full sequence is Serine hydroxymethyltransferase (415 aa).

Residues Leu121 and 125–127 each bind (6S)-5,6,7,8-tetrahydrofolate; that span reads GHL. Residue Lys230 is modified to N6-(pyridoxal phosphate)lysine. 355-357 contributes to the (6S)-5,6,7,8-tetrahydrofolate binding site; sequence SPF.

Belongs to the SHMT family. In terms of assembly, homodimer. The cofactor is pyridoxal 5'-phosphate.

It is found in the cytoplasm. It carries out the reaction (6R)-5,10-methylene-5,6,7,8-tetrahydrofolate + glycine + H2O = (6S)-5,6,7,8-tetrahydrofolate + L-serine. It participates in one-carbon metabolism; tetrahydrofolate interconversion. Its pathway is amino-acid biosynthesis; glycine biosynthesis; glycine from L-serine: step 1/1. Functionally, catalyzes the reversible interconversion of serine and glycine with tetrahydrofolate (THF) serving as the one-carbon carrier. This reaction serves as the major source of one-carbon groups required for the biosynthesis of purines, thymidylate, methionine, and other important biomolecules. Also exhibits THF-independent aldolase activity toward beta-hydroxyamino acids, producing glycine and aldehydes, via a retro-aldol mechanism. The chain is Serine hydroxymethyltransferase from Lactococcus lactis subsp. lactis (strain IL1403) (Streptococcus lactis).